A 249-amino-acid chain; its full sequence is Coproheme decarboxylase (249 aa).

Fe-coproporphyrin III-binding positions include Arg-131, 145-149 (YPMDK), His-172, Gln-185, and Ser-223. Tyr-145 is a catalytic residue.

It belongs to the ChdC family. Type 1 subfamily. Fe-coproporphyrin III is required as a cofactor.

It catalyses the reaction Fe-coproporphyrin III + 2 H2O2 + 2 H(+) = heme b + 2 CO2 + 4 H2O. The catalysed reaction is Fe-coproporphyrin III + H2O2 + H(+) = harderoheme III + CO2 + 2 H2O. It carries out the reaction harderoheme III + H2O2 + H(+) = heme b + CO2 + 2 H2O. Its pathway is porphyrin-containing compound metabolism; protoheme biosynthesis. Its function is as follows. Involved in coproporphyrin-dependent heme b biosynthesis. Catalyzes the decarboxylation of Fe-coproporphyrin III (coproheme) to heme b (protoheme IX), the last step of the pathway. The reaction occurs in a stepwise manner with a three-propionate intermediate. In Halalkalibacterium halodurans (strain ATCC BAA-125 / DSM 18197 / FERM 7344 / JCM 9153 / C-125) (Bacillus halodurans), this protein is Coproheme decarboxylase.